A 521-amino-acid chain; its full sequence is FAD-dependent monooxygenase mdpD (521 aa).

The interval 1–48 (MTHFPVNIASDKQEFDPERWAKTPTTESSVNGENGTAPTSGLPSRHPS) is disordered. Positions 11–21 (DKQEFDPERWA) are enriched in basic and acidic residues. A compositionally biased stretch (polar residues) spans 23 to 48 (TPTTESSVNGENGTAPTSGLPSRHPS). FAD-binding residues include valine 94 and arginine 160. Catalysis depends on residues arginine 244 and tyrosine 271. FAD-binding residues include aspartate 369 and glycine 382.

It belongs to the paxM FAD-dependent monooxygenase family. FAD is required as a cofactor.

The protein operates within secondary metabolite biosynthesis. Functionally, FAD-dependent monooxygenase; part of the gene cluster that mediates the biosynthesis of monodictyphenone, a prenyl xanthone derivative. The pathway begins with the synthesis of atrochrysone thioester by the polyketide synthase (PKS) mdpG. The atrochrysone carboxyl ACP thioesterase mdpF then breaks the thioester bond and releases the atrochrysone carboxylic acid from mdpG. The atrochrysone carboxylic acid is then converted to atrochrysone which is further transformed into emodin anthrone. The next step is performed by the anthrone oxygenase mdpH that catalyzes the oxidation of emodinanthrone to emodin. Emodin is further modified to yield monodictyphenone via several steps involving mdpB, mdpC mdpJ, mdpK and mdpL. These enzymes with xptA, xptB and xptC are also proposed to be involved in the synthesis of shamixanthone from emodin. Especially, direct reduction of emodin by the short chain dehydrogenase mdpC followed by dehydration catalyzed by the scytalone dehydratase-like protein mdpB gives loss of oxygen and formation of chrysophanol intermediate in two simple steps. The sequence is that of FAD-dependent monooxygenase mdpD from Emericella nidulans (strain FGSC A4 / ATCC 38163 / CBS 112.46 / NRRL 194 / M139) (Aspergillus nidulans).